The primary structure comprises 831 residues: uncharacterized protein (831 aa).

The disordered stretch occupies residues 285 to 311 (ALNLKRQQLKEEQKEQQSTGDRSDVST). 470-477 (GDTGNGKS) is a binding site for ATP.

This is an uncharacterized protein from Bacillus subtilis (strain 168).